The primary structure comprises 120 residues: Large ribosomal subunit protein uL24 (120 aa).

The disordered stretch occupies residues Met-1–Arg-33. The span at Asn-10–Lys-22 shows a compositional bias: basic and acidic residues.

The protein belongs to the universal ribosomal protein uL24 family. In terms of assembly, part of the 50S ribosomal subunit.

Its function is as follows. One of two assembly initiator proteins, it binds directly to the 5'-end of the 23S rRNA, where it nucleates assembly of the 50S subunit. In terms of biological role, located at the polypeptide exit tunnel on the outside of the subunit. The sequence is that of Large ribosomal subunit protein uL24 from Natronomonas pharaonis (strain ATCC 35678 / DSM 2160 / CIP 103997 / JCM 8858 / NBRC 14720 / NCIMB 2260 / Gabara) (Halobacterium pharaonis).